The chain runs to 758 residues: 52 kDa repressor of the inhibitor of the protein kinase (758 aa).

The segment at 1-86 (MPNFCAAPNC…LRDNAIPTIF (86 aa)) adopts a THAP-type zinc-finger fold. The segment at 116 to 141 (QKKIEETSEQEQETNTNAQNPSAEAV) is disordered. Serine 563 is modified (phosphoserine).

In terms of assembly, interacts with DNAJC3, probably sequestring it.

Its function is as follows. Upstream regulator of interferon-induced serine/threonine protein kinase R (PKR). May block the PKR-inhibitory function of DNAJC3, resulting in restoration of kinase activity and suppression of cell growth. The chain is 52 kDa repressor of the inhibitor of the protein kinase from Mus musculus (Mouse).